Reading from the N-terminus, the 96-residue chain is Small ribosomal subunit protein bS6 (96 aa).

It belongs to the bacterial ribosomal protein bS6 family.

Binds together with bS18 to 16S ribosomal RNA. In Streptomyces coelicolor (strain ATCC BAA-471 / A3(2) / M145), this protein is Small ribosomal subunit protein bS6 (rpsF).